The following is a 163-amino-acid chain: Photosystem II extrinsic protein V (163 aa).

A signal peptide spans 1 to 26 (MLRKLILITVATVFFACQLLVNPVSA). Residues Cys63, Cys66, His67, and His118 each coordinate heme c.

The protein belongs to the cytochrome c family. PsbV subfamily. As to quaternary structure, PSII is composed of 1 copy each of membrane proteins PsbA, PsbB, PsbC, PsbD, PsbE, PsbF, PsbH, PsbI, PsbJ, PsbK, PsbL, PsbM, PsbT, PsbX, PsbY, PsbZ, Psb30/Ycf12, peripheral proteins PsbO, CyanoQ (PsbQ), PsbU, PsbV and a large number of cofactors. It forms dimeric complexes. It depends on heme c as a cofactor.

Its subcellular location is the cellular thylakoid membrane. Functionally, one of the extrinsic, lumenal subunits of photosystem II (PSII). PSII is a light-driven water plastoquinone oxidoreductase, using light energy to abstract electrons from H(2)O, generating a proton gradient subsequently used for ATP formation. The extrinsic proteins stabilize the structure of photosystem II oxygen-evolving complex (OEC), the ion environment of oxygen evolution and protect the OEC against heat-induced inactivation. Low-potential cytochrome c that plays a role in the OEC of PSII. The polypeptide is Photosystem II extrinsic protein V (Aphanothece halophytica).